A 117-amino-acid chain; its full sequence is Large ribosomal subunit protein bL20c (117 aa).

The protein belongs to the bacterial ribosomal protein bL20 family.

It is found in the plastid. The protein localises to the chloroplast. Binds directly to 23S ribosomal RNA and is necessary for the in vitro assembly process of the 50S ribosomal subunit. It is not involved in the protein synthesizing functions of that subunit. This Olimarabidopsis pumila (Dwarf rocket) protein is Large ribosomal subunit protein bL20c.